Here is a 265-residue protein sequence, read N- to C-terminus: 3-methyl-2-oxobutanoate hydroxymethyltransferase (265 aa).

The Mg(2+) site is built by Asp45 and Asp84. Residues 45–46 (DS), Asp84, and Lys112 contribute to the 3-methyl-2-oxobutanoate site. Glu114 is a Mg(2+) binding site. The active-site Proton acceptor is Glu181.

This sequence belongs to the PanB family. As to quaternary structure, homodecamer; pentamer of dimers. Mg(2+) is required as a cofactor.

It is found in the cytoplasm. The catalysed reaction is 3-methyl-2-oxobutanoate + (6R)-5,10-methylene-5,6,7,8-tetrahydrofolate + H2O = 2-dehydropantoate + (6S)-5,6,7,8-tetrahydrofolate. Its pathway is cofactor biosynthesis; (R)-pantothenate biosynthesis; (R)-pantoate from 3-methyl-2-oxobutanoate: step 1/2. In terms of biological role, catalyzes the reversible reaction in which hydroxymethyl group from 5,10-methylenetetrahydrofolate is transferred onto alpha-ketoisovalerate to form ketopantoate. The chain is 3-methyl-2-oxobutanoate hydroxymethyltransferase from Yersinia enterocolitica serotype O:8 / biotype 1B (strain NCTC 13174 / 8081).